Reading from the N-terminus, the 88-residue chain is UPF0335 protein M446_5200 (88 aa).

It belongs to the UPF0335 family.

In Methylobacterium sp. (strain 4-46), this protein is UPF0335 protein M446_5200.